The sequence spans 287 residues: Phosphatidylserine decarboxylase proenzyme (287 aa).

Catalysis depends on charge relay system; for autoendoproteolytic cleavage activity residues D90, H147, and S253. The active-site Schiff-base intermediate with substrate; via pyruvic acid; for decarboxylase activity is S253. S253 carries the post-translational modification Pyruvic acid (Ser); by autocatalysis.

The protein belongs to the phosphatidylserine decarboxylase family. PSD-B subfamily. Prokaryotic type I sub-subfamily. Heterodimer of a large membrane-associated beta subunit and a small pyruvoyl-containing alpha subunit. Pyruvate is required as a cofactor. Post-translationally, is synthesized initially as an inactive proenzyme. Formation of the active enzyme involves a self-maturation process in which the active site pyruvoyl group is generated from an internal serine residue via an autocatalytic post-translational modification. Two non-identical subunits are generated from the proenzyme in this reaction, and the pyruvate is formed at the N-terminus of the alpha chain, which is derived from the carboxyl end of the proenzyme. The autoendoproteolytic cleavage occurs by a canonical serine protease mechanism, in which the side chain hydroxyl group of the serine supplies its oxygen atom to form the C-terminus of the beta chain, while the remainder of the serine residue undergoes an oxidative deamination to produce ammonia and the pyruvoyl prosthetic group on the alpha chain. During this reaction, the Ser that is part of the protease active site of the proenzyme becomes the pyruvoyl prosthetic group, which constitutes an essential element of the active site of the mature decarboxylase.

The protein localises to the cell membrane. The catalysed reaction is a 1,2-diacyl-sn-glycero-3-phospho-L-serine + H(+) = a 1,2-diacyl-sn-glycero-3-phosphoethanolamine + CO2. The protein operates within phospholipid metabolism; phosphatidylethanolamine biosynthesis; phosphatidylethanolamine from CDP-diacylglycerol: step 2/2. Functionally, catalyzes the formation of phosphatidylethanolamine (PtdEtn) from phosphatidylserine (PtdSer). This is Phosphatidylserine decarboxylase proenzyme from Aliivibrio fischeri (strain MJ11) (Vibrio fischeri).